The primary structure comprises 907 residues: MIQKVITVNGIEQNLFVDAEALLSDVLRQQLGLTGVKVGCEQGQCGACSVILDGKVVRACVTKMKRVADGAQITTIEGVGQPENLHPLQKAWVLHGGAQCGFCSPGFIVSAKGLLDTNADPSREDVRDWFQKHRNACRCTGYKPLVDAVMDAAAVINGKKPETDLEFKMPADGRIWGSKYPRPTAVAKVTGTLDYGADLGLKMPAGTLHLAMVQAKVSHANIKGIDTSEALTMPGVHSVITHKDVKGKNRITGLITFPTNKGDGWDRPILCDEKVFQYGDCIALVCADSEANARAAAEKVKVDLEELPAYMSGPAAAAEDAIEIHPGTPNVYFEQPIVKGEDTGPIFASADVTVEGDFYVGRQPHMPIEPDVAFAYMGDDGKCYIHSKSIGVHLHLYMIAPGVGLEPDQLVLVANPMGGTFGYKFSPTSEALVAVAAMATGRPVHLRYNYQQQQQYTGKRSPWEMNVKFAAKKDGTLLAMESDWLVDHGPYSEFGDLLTLRGAQFIGAGYNIPNIRGLGRTVATNHVWGSAFRGYGAPQSMFASECLMDMLAEKLGMDPLELRYKNAYRPGDTNPTGQEPEVFSLPDMIDQLRPKYQAALEKAQKESTATHKKGVGISIGVYGSGLDGPDASEAWAELNADGTITVHTAWEDHGQGADIGCVGTAHEALRPMGVAPEKIKFTWPNTATTPNSGPSGGSRQQVMTGNAIRVACENLLKACEKPGGGYYTYDELKAADKPTKITGNWTASGATHCDAVTGLGKPFVVYMYGVFMAEVTVDVATGQTTVDGMTLMADLGSLCNQLATDGQIYGGLAQGIGLALSEDFEDIKKHATLVGAGFPFIKQIPDKLDIVYVNHPRPDGPFGASGVGELPLTSPHAAIINAIKSATGVRIYRLPAYPEKVLEALKA.

In terms of domain architecture, 2Fe-2S ferredoxin-type spans 2–79 (IQKVITVNGI…GAQITTIEGV (78 aa)). [2Fe-2S] cluster contacts are provided by Cys-40, Cys-45, Cys-48, Cys-60, Cys-100, Cys-103, Cys-137, and Cys-139. Residues His-653 and Glu-869 each contribute to the Mo-molybdopterin cytosine dinucleotide site.

This sequence belongs to the xanthine dehydrogenase family. Homodimer. Mo-molybdopterin cytosine dinucleotide serves as cofactor. The cofactor is [2Fe-2S] cluster.

The catalysed reaction is an aldehyde + A + H2O = a carboxylate + AH2 + H(+). This is Aldehyde oxidoreductase (mop) from Megalodesulfovibrio gigas (Desulfovibrio gigas).